The sequence spans 167 residues: MATEVHNLQELRRSASLATKVFIQRDYSDGTICQFQTKFPPELDSRIERQLFEETVKTLNGFYAEAEKIGGSSYLEGCLACATAYFIFLCMETHYEKVLKKISRYIQEQNEKVFAPRGLLLTDPVERGMRVIEISIYEDRCSSGSSSSGSSSGSGSSSAGGGGAGAR.

S-palmitoyl cysteine attachment occurs at residues cysteine 78 and cysteine 81. Residues 140-167 (RCSSGSSSSGSSSGSGSSSAGGGGAGAR) form a disordered region. The segment covering 142-157 (SSGSSSSGSSSGSGSS) has biased composition (low complexity). Over residues 158-167 (SAGGGGAGAR) the composition is skewed to gly residues.

It belongs to the ERF4 family. Palmitoylated by ZDHHC5. Palmitoylation is required for the maintenance of ZDHHC5 at the plasma membrane.

The protein localises to the cell membrane. The protein resides in the golgi apparatus membrane. Play a role in cell adhesion by regulating the plasma membrane localization of the palmitoyltransferase ZDHHC5. May be involved in protein transport from Golgi to cell surface. This chain is Golgin subfamily A member 7B (GOLGA7B), found in Mus musculus (Mouse).